A 407-amino-acid polypeptide reads, in one-letter code: Putative nickel insertion protein (407 aa).

It belongs to the LarC family.

The chain is Putative nickel insertion protein from Gloeothece citriformis (strain PCC 7424) (Cyanothece sp. (strain PCC 7424)).